We begin with the raw amino-acid sequence, 603 residues long: Elongation factor 4 (603 aa).

Residues 6 to 188 enclose the tr-type G domain; sequence KYVRNFSIIA…DIVKNVPAPI (183 aa). GTP contacts are provided by residues 18–23 and 135–138; these read DHGKST and NKID.

It belongs to the TRAFAC class translation factor GTPase superfamily. Classic translation factor GTPase family. LepA subfamily.

It is found in the cell membrane. The catalysed reaction is GTP + H2O = GDP + phosphate + H(+). In terms of biological role, required for accurate and efficient protein synthesis under certain stress conditions. May act as a fidelity factor of the translation reaction, by catalyzing a one-codon backward translocation of tRNAs on improperly translocated ribosomes. Back-translocation proceeds from a post-translocation (POST) complex to a pre-translocation (PRE) complex, thus giving elongation factor G a second chance to translocate the tRNAs correctly. Binds to ribosomes in a GTP-dependent manner. This is Elongation factor 4 from Finegoldia magna (strain ATCC 29328 / DSM 20472 / WAL 2508) (Peptostreptococcus magnus).